Consider the following 350-residue polypeptide: MDDMCSILTEEELSLYNITDCEFVKPGGLGPVLGPRHLSALVFYGLVFLLGVPGNALVVWVTGFRMPRSVTSLWFLNLALADLLCCLSLPLLMVPLAMDQHWPFGPVACKLLKGLLYLIMFCSVLLLVLISLDRFLLVSWPVWCQNWRRPRKAGWVCVGVWLLALLGSIPQFVYVKEVQLSTSKSECLGLYTVASAWANTTARFLVGFVLPFITIVTCHWVVYSRARRGSGVGPGRVSEARSRRTLRVIVAVSLSFFLCWFPLHILDFLVLSTPRHSSHSANIQLAHTLALCLAYCNSCLNPLLYVCLGRGFKQNINRSLRNMFNFATEESVTRQSMFKSTSERTQEMNM.

The Extracellular segment spans residues 1–37; sequence MDDMCSILTEEELSLYNITDCEFVKPGGLGPVLGPRH. Residue Asn17 is glycosylated (N-linked (GlcNAc...) asparagine). Residues 38–64 traverse the membrane as a helical segment; that stretch reads LSALVFYGLVFLLGVPGNALVVWVTGF. The Cytoplasmic segment spans residues 65–69; sequence RMPRS. A helical membrane pass occupies residues 70–93; it reads VTSLWFLNLALADLLCCLSLPLLM. Residues 94–110 are Extracellular-facing; that stretch reads VPLAMDQHWPFGPVACK. Cys109 and Cys187 are oxidised to a cystine. Residues 111-132 form a helical membrane-spanning segment; that stretch reads LLKGLLYLIMFCSVLLLVLISL. Residues 133-154 lie on the Cytoplasmic side of the membrane; that stretch reads DRFLLVSWPVWCQNWRRPRKAG. The helical transmembrane segment at 155–174 threads the bilayer; the sequence is WVCVGVWLLALLGSIPQFVY. Over 175-197 the chain is Extracellular; sequence VKEVQLSTSKSECLGLYTVASAW. The chain crosses the membrane as a helical span at residues 198-223; it reads ANTTARFLVGFVLPFITIVTCHWVVY. Residues 224 to 247 are Cytoplasmic-facing; that stretch reads SRARRGSGVGPGRVSEARSRRTLR. Residues 248 to 270 traverse the membrane as a helical segment; that stretch reads VIVAVSLSFFLCWFPLHILDFLV. Over 271-287 the chain is Extracellular; sequence LSTPRHSSHSANIQLAH. A helical membrane pass occupies residues 288–308; that stretch reads TLALCLAYCNSCLNPLLYVCL. Residues 309-350 are Cytoplasmic-facing; the sequence is GRGFKQNINRSLRNMFNFATEESVTRQSMFKSTSERTQEMNM.

The protein belongs to the G-protein coupled receptor 1 family. High expression in head, kidney and posterior kidney, lower levels in peripheral blood leukocytes and spleen, low expression in brain and gills, heart, intestine and very low expression in liver and muscle.

Its subcellular location is the cell membrane. Its function is as follows. Receptor for the chemotactic and inflammatory peptide anaphylatoxin C5a. This receptor stimulates chemotaxis, granule enzyme release and superoxide anion production. In Oncorhynchus mykiss (Rainbow trout), this protein is C5a anaphylatoxin chemotactic receptor 1 (c5ar1).